A 125-amino-acid chain; its full sequence is Phosphoribosyl-AMP cyclohydrolase (125 aa).

Asp-74 is a Mg(2+) binding site. Zn(2+) is bound at residue Cys-75. Mg(2+) contacts are provided by Asp-76 and Asp-78. Zn(2+) contacts are provided by Cys-92 and Cys-99.

It belongs to the PRA-CH family. As to quaternary structure, homodimer. It depends on Mg(2+) as a cofactor. Zn(2+) serves as cofactor.

It localises to the cytoplasm. It carries out the reaction 1-(5-phospho-beta-D-ribosyl)-5'-AMP + H2O = 1-(5-phospho-beta-D-ribosyl)-5-[(5-phospho-beta-D-ribosylamino)methylideneamino]imidazole-4-carboxamide. It functions in the pathway amino-acid biosynthesis; L-histidine biosynthesis; L-histidine from 5-phospho-alpha-D-ribose 1-diphosphate: step 3/9. Functionally, catalyzes the hydrolysis of the adenine ring of phosphoribosyl-AMP. This Pelobacter propionicus (strain DSM 2379 / NBRC 103807 / OttBd1) protein is Phosphoribosyl-AMP cyclohydrolase.